Reading from the N-terminus, the 339-residue chain is tRNA methyltransferase 10 homolog A (339 aa).

2 disordered regions span residues 1–90 (MSSE…HDRK) and 282–339 (DKAC…SLPH). The segment covering 14 to 35 (NVDKKQGINEDQEESQKPRLGE) has biased composition (basic and acidic residues). The stretch at 52–81 (KQWEEQRELRKQKRKEKRKRKKLERQCQME) forms a coiled coil. Residues 61–74 (RKQKRKEKRKRKKL) are compositionally biased toward basic residues. The SAM-dependent MTase TRM10-type domain occupies 89-279 (RKRVRRDVVH…TILPQRKGAV (191 aa)). Acidic residues predominate over residues 300 to 309 (GGSDSDSSEE). Positions 310 to 330 (EYSRNELDSPHEEKQDKENHT) are enriched in basic and acidic residues. A Phosphoserine modification is found at serine 336.

It belongs to the class IV-like SAM-binding methyltransferase superfamily. TRM10 family. In terms of assembly, interacts with tRNA. Expressed in embryonic and fetal brain. It is expressed throughout the dorsal telencephalon at 8 and 11 weeks of gestation, with highest expression in ventricular zone and marginal zone. Detected in cerebellar cortex and nuclei, but not in dorsal telencephalon, at later stages.

Its subcellular location is the nucleus. It localises to the nucleolus. The enzyme catalyses guanosine(9) in tRNA + S-adenosyl-L-methionine = N(1)-methylguanosine(9) in tRNA + S-adenosyl-L-homocysteine + H(+). In terms of biological role, S-adenosyl-L-methionine-dependent guanine N(1)-methyltransferase that catalyzes the formation of N(1)-methylguanine at position 9 (m1G9) in tRNAs. Probably not able to catalyze formation of N(1)-methyladenine at position 9 (m1A9) in tRNAs. In Homo sapiens (Human), this protein is tRNA methyltransferase 10 homolog A (TRMT10A).